The chain runs to 164 residues: Phosphopantetheine adenylyltransferase (164 aa).

S9 lines the substrate pocket. ATP-binding positions include 9–10 (SF) and H17. Positions 41, 73, and 87 each coordinate substrate. Residues 88-90 (GLR), E98, and 122-128 (YSYLSSS) contribute to the ATP site.

It belongs to the bacterial CoaD family. In terms of assembly, homohexamer. Mg(2+) serves as cofactor.

It localises to the cytoplasm. The enzyme catalyses (R)-4'-phosphopantetheine + ATP + H(+) = 3'-dephospho-CoA + diphosphate. It functions in the pathway cofactor biosynthesis; coenzyme A biosynthesis; CoA from (R)-pantothenate: step 4/5. In terms of biological role, reversibly transfers an adenylyl group from ATP to 4'-phosphopantetheine, yielding dephospho-CoA (dPCoA) and pyrophosphate. This chain is Phosphopantetheine adenylyltransferase, found in Rhodococcus opacus (strain B4).